The sequence spans 197 residues: Beta-crystallin A2 (197 aa).

The N-terminal arm stretch occupies residues 1–11 (MSGTLSQGSSP). Beta/gamma crystallin 'Greek key' domains follow at residues 12 to 52 (ARLT…KVES) and 53 to 99 (GAWV…RPLL). A connecting peptide region spans residues 100-105 (CANHSD). Beta/gamma crystallin 'Greek key' domains follow at residues 106-147 (SRVT…KVTS) and 148-196 (GAWV…RRVQ).

This sequence belongs to the beta/gamma-crystallin family. In terms of assembly, homo/heterodimer, or complexes of higher-order. The structure of beta-crystallin oligomers seems to be stabilized through interactions between the N-terminal arms.

Crystallins are the dominant structural components of the vertebrate eye lens. The sequence is that of Beta-crystallin A2 (CRYBA2) from Macropus fuliginosus (Western gray kangaroo).